The primary structure comprises 64 residues: Large ribosomal subunit protein eL37 (64 aa).

Cysteine 20, cysteine 23, cysteine 35, and cysteine 38 together coordinate Zn(2+). The C4-type zinc finger occupies 20 to 38; that stretch reads CRRCGRRSFHVRKKVCAAC.

It belongs to the eukaryotic ribosomal protein eL37 family. Zn(2+) is required as a cofactor.

Its function is as follows. Binds to the 23S rRNA. In Methanococcus maripaludis (strain C5 / ATCC BAA-1333), this protein is Large ribosomal subunit protein eL37.